The following is a 247-amino-acid chain: 6-carboxyhexanoate--CoA ligase (247 aa).

Belongs to the BioW family. In terms of assembly, homodimer. Requires Mg(2+) as cofactor.

The catalysed reaction is heptanedioate + ATP + CoA = 6-carboxyhexanoyl-CoA + AMP + diphosphate. It functions in the pathway metabolic intermediate metabolism; pimeloyl-CoA biosynthesis; pimeloyl-CoA from pimelate: step 1/1. Its function is as follows. Catalyzes the transformation of pimelate into pimeloyl-CoA with concomitant hydrolysis of ATP to AMP. This Corynebacterium diphtheriae (strain ATCC 700971 / NCTC 13129 / Biotype gravis) protein is 6-carboxyhexanoate--CoA ligase.